The following is a 247-amino-acid chain: Transmembrane protein 33 (247 aa).

Ala2 bears the N-acetylalanine mark. Residues 2 to 31 (ADTTPNGPQGAGAVQFMMTNKLDTAMWLSR) are Lumenal-facing. The chain crosses the membrane as a helical span at residues 32 to 52 (LFTVYCSALFVLPLLGLHEAA). At 53–100 (SFYQRALLANALTSALRLHQRLPHFQLSRAFLAQALLEDSCHYLLYSL) the chain is on the cytoplasmic side. The helical transmembrane segment at 101–121 (IFVNSYPVTMSIFPVLLFSLL) threads the bilayer. Over 122 to 155 (HAATYTKKVLDAKGSNSLPLLRSVLDKLSTNQQN) the chain is Lumenal. The chain crosses the membrane as a helical span at residues 156 to 176 (ILKFIACNEIFLMPATVFMLF). The Cytoplasmic portion of the chain corresponds to 177–247 (SGQGSLLQPF…FISRLAPTVA (71 aa)).

It belongs to the PER33/POM33 family. As to quaternary structure, interacts with EIF2AK3. Interacts with ARL6IP1, isoform RTN1-A of RTN1, isoform RTN2-B of RTN2, isoform 3 of RTN3 and isoform 3 of RTN4. Interacts with RNF5. Interacts with RNF26. Interacts with PKD2. In terms of tissue distribution, highly expressed in the liver and significantly in brain, lungs and kidneys.

It localises to the endoplasmic reticulum membrane. Its subcellular location is the melanosome. The protein localises to the nucleus envelope. In terms of biological role, acts as a regulator of the tubular endoplasmic reticulum (ER) network by modulating intracellular calcium homeostasis. Mechanistically, stimulates PKD2 calcium-dependent activity. Suppresses the RTN3/4-induced formation of the ER tubules. Positively regulates PERK-mediated and IRE1-mediated unfolded protein response signaling. Plays an essential role in VEGF-mediated release of Ca(2+) from ER stores during angiogenesis. Also plays a role in the modulation of innate immune signaling through the cGAS-STING pathway by interacting with RNF26. Participates in lipid metabolism by acting as a downstream effector of the pyruvate kinase/PKM. Forms a complex with RNF5 to facilitate polyubiquitination and subsequent degradation of SCAP on the ER membrane. This is Transmembrane protein 33 (Tmem33) from Rattus norvegicus (Rat).